Here is a 310-residue protein sequence, read N- to C-terminus: Protein DOS2 (310 aa).

2 stretches are compositionally biased toward basic and acidic residues: residues 15–26 (DKISNSHTKETG) and 135–146 (SNDKDENSKENE). 2 disordered regions span residues 15-45 (DKIS…KTNE) and 131-151 (AEND…AVGG). One can recognise a BSD domain in the interval 176–228 (QLDPFDVDEKTEEICSILQGDKDISKLMNDIVPHKISYKDFWHIYFLQRNKIL). Positions 240–310 (KKEKETEEKE…KDDDDDDDWE (71 aa)) are disordered. The span at 247-263 (EKEVEWDDEEEEEDDDK) shows a compositional bias: acidic residues. Composition is skewed to basic and acidic residues over residues 264–276 (VEAV…KGET) and 284–300 (GLKD…KDES). Over residues 301 to 310 (KDDDDDDDWE) the composition is skewed to acidic residues.

Acts in ubiquitin metabolism and is necessary for the control of single-copy DNA replication. The chain is Protein DOS2 (DOS2) from Saccharomyces cerevisiae (strain ATCC 204508 / S288c) (Baker's yeast).